The following is a 43-amino-acid chain: Neurotrophin-4 (43 aa).

This sequence belongs to the NGF-beta family.

Its function is as follows. NT-4 could play a role in oogenesis and/or early embryogenesis. NT-4 interacts with the low affinity NGF receptor and elicits neurite outgrowth from explanted dorsal root ganglia with no and lower activity in sympathetic and nodose ganglia, respectively. This chain is Neurotrophin-4 (NTF4), found in Macrovipera lebetinus (Levantine viper).